The primary structure comprises 552 residues: Undecaprenyl phosphate-alpha-4-amino-4-deoxy-L-arabinose arabinosyl transferase (552 aa).

The next 11 helical transmembrane spans lie at 4 to 24, 81 to 101, 113 to 133, 176 to 196, 207 to 227, 255 to 275, 289 to 309, 313 to 333, 351 to 371, 384 to 404, and 411 to 431; these read IAGW…PLPG, FAVR…VFWL, VVAV…SYAV, FMTK…PWVI, FGPL…LAIA, APFW…LGLL, QGGD…FSIA, LPTY…GYVQ, LLVG…WGIT, VILG…SLYH, and WSAA…PQQV.

It belongs to the glycosyltransferase 83 family.

It is found in the cell inner membrane. It catalyses the reaction 4-amino-4-deoxy-alpha-L-arabinopyranosyl di-trans,octa-cis-undecaprenyl phosphate + lipid IVA = lipid IIA + di-trans,octa-cis-undecaprenyl phosphate.. It participates in lipopolysaccharide metabolism; 4-amino-4-deoxy-beta-L-arabinose-lipid A biosynthesis. In terms of biological role, catalyzes the transfer of the L-Ara4N moiety of the glycolipid undecaprenyl phosphate-alpha-L-Ara4N to lipid A. The modified arabinose is attached to lipid A and is required for resistance to polymyxin and cationic antimicrobial peptides. In Edwardsiella ictaluri (strain 93-146), this protein is Undecaprenyl phosphate-alpha-4-amino-4-deoxy-L-arabinose arabinosyl transferase.